Consider the following 99-residue polypeptide: Large ribosomal subunit protein uL23 (99 aa).

It belongs to the universal ribosomal protein uL23 family. As to quaternary structure, part of the 50S ribosomal subunit. Contacts protein L29, and trigger factor when it is bound to the ribosome.

One of the early assembly proteins it binds 23S rRNA. One of the proteins that surrounds the polypeptide exit tunnel on the outside of the ribosome. Forms the main docking site for trigger factor binding to the ribosome. This is Large ribosomal subunit protein uL23 from Agathobacter rectalis (strain ATCC 33656 / DSM 3377 / JCM 17463 / KCTC 5835 / VPI 0990) (Eubacterium rectale).